We begin with the raw amino-acid sequence, 160 residues long: Probable NADH dehydrogenase [ubiquinone] 1 beta subcomplex subunit 2, mitochondrial (160 aa).

The protein belongs to the complex I NDUFB2 subunit family. As to quaternary structure, complex I is composed of 45 different subunits.

Its subcellular location is the mitochondrion inner membrane. Accessory subunit of the mitochondrial membrane respiratory chain NADH dehydrogenase (Complex I), that is believed not to be involved in catalysis. Complex I functions in the transfer of electrons from NADH to the respiratory chain. The immediate electron acceptor for the enzyme is believed to be ubiquinone. This is Probable NADH dehydrogenase [ubiquinone] 1 beta subcomplex subunit 2, mitochondrial from Caenorhabditis briggsae.